The chain runs to 496 residues: Probable cytosol aminopeptidase (496 aa).

Mn(2+)-binding residues include K267 and D272. Residue K279 is part of the active site. D290, D349, and E351 together coordinate Mn(2+). Residue R353 is part of the active site.

This sequence belongs to the peptidase M17 family. The cofactor is Mn(2+).

The protein resides in the cytoplasm. It catalyses the reaction Release of an N-terminal amino acid, Xaa-|-Yaa-, in which Xaa is preferably Leu, but may be other amino acids including Pro although not Arg or Lys, and Yaa may be Pro. Amino acid amides and methyl esters are also readily hydrolyzed, but rates on arylamides are exceedingly low.. The enzyme catalyses Release of an N-terminal amino acid, preferentially leucine, but not glutamic or aspartic acids.. Presumably involved in the processing and regular turnover of intracellular proteins. Catalyzes the removal of unsubstituted N-terminal amino acids from various peptides. The sequence is that of Probable cytosol aminopeptidase from Methylobacillus flagellatus (strain ATCC 51484 / DSM 6875 / VKM B-1610 / KT).